The sequence spans 600 residues: MVNNMTDLTAQEPAWQTRDHLDDPVIGELRNRFGPDAFTVQATRTGVPVVWIKREQLLEVGDFLKKLPKPYVMLFDLHGMDERLRTHREGLPAADFSVFYHLISIDRNRDIMLKVALAENDLHVPTFTKLFPNANWYERETWDLFGITFDGHPNLRRIMMPQTWKGHPLRKDYPARATEFSPFELTKAKQDLEMEALTFKPEEWGMKRGTENEDFMFLNLGPNHPSAHGAFRIVLQLDGEEIVDCVPDIGYHHRGAEKMGERQSWHSYIPYTDRIEYLGGCVNEMPYVLAVEKLAGITVPDRVNVIRVMLSELFRINSHLLYISTFIQDVGAMTPVFFAFTDRQKIYDLVEAITGFRMHPAWFRIGGVAHDLPRGWDRLLREFLDWMPKRLASYEKAALQNTILKGRSQGVAAYGAKEALEWGTTGAGLRATGIDFDVRKARPYSGYENFDFEIPVGGGISDCYTRVMLKVEELRQSLRILEQCLNNMPEGPFKADHPLTTPPPKERTLQHIETLITHFLQVSWGPVMPANESFQMVEATKGINSYYLTSDGSTMSYRTRIRTPSYAHLQQIPAAIRGSLVSDLIVYLGSIDFVMSDVDR.

The segment at 1–190 (MVNNMTDLTA…SPFELTKAKQ (190 aa)) is NADH dehydrogenase I subunit C. Residues 214-600 (DFMFLNLGPN…IDFVMSDVDR (387 aa)) form an NADH dehydrogenase I subunit D region.

This sequence in the N-terminal section; belongs to the complex I 30 kDa subunit family. In the C-terminal section; belongs to the complex I 49 kDa subunit family. As to quaternary structure, NDH-1 is composed of 13 different subunits. Subunits NuoB, CD, E, F, and G constitute the peripheral sector of the complex.

The protein resides in the cell inner membrane. It catalyses the reaction a quinone + NADH + 5 H(+)(in) = a quinol + NAD(+) + 4 H(+)(out). Its function is as follows. NDH-1 shuttles electrons from NADH, via FMN and iron-sulfur (Fe-S) centers, to quinones in the respiratory chain. The immediate electron acceptor for the enzyme in this species is believed to be ubiquinone. Couples the redox reaction to proton translocation (for every two electrons transferred, four hydrogen ions are translocated across the cytoplasmic membrane), and thus conserves the redox energy in a proton gradient. The chain is NADH-quinone oxidoreductase subunit C/D from Escherichia coli O127:H6 (strain E2348/69 / EPEC).